Reading from the N-terminus, the 123-residue chain is Large ribosomal subunit protein uL14 (123 aa).

It belongs to the universal ribosomal protein uL14 family. In terms of assembly, part of the 50S ribosomal subunit. Forms a cluster with proteins L3 and L19. In the 70S ribosome, L14 and L19 interact and together make contacts with the 16S rRNA in bridges B5 and B8.

In terms of biological role, binds to 23S rRNA. Forms part of two intersubunit bridges in the 70S ribosome. This chain is Large ribosomal subunit protein uL14, found in Tropheryma whipplei (strain TW08/27) (Whipple's bacillus).